A 181-amino-acid polypeptide reads, in one-letter code: Adenine phosphoribosyltransferase (181 aa).

The protein belongs to the purine/pyrimidine phosphoribosyltransferase family. As to quaternary structure, homodimer.

Its subcellular location is the cytoplasm. It catalyses the reaction AMP + diphosphate = 5-phospho-alpha-D-ribose 1-diphosphate + adenine. The protein operates within purine metabolism; AMP biosynthesis via salvage pathway; AMP from adenine: step 1/1. Its function is as follows. Catalyzes a salvage reaction resulting in the formation of AMP, that is energically less costly than de novo synthesis. The protein is Adenine phosphoribosyltransferase of Vibrio vulnificus (strain CMCP6).